The chain runs to 285 residues: Probable endonuclease 4 (285 aa).

Residues His69, His109, Glu145, Asp179, His182, His216, Asp229, His231, and Glu261 each coordinate Zn(2+).

The protein belongs to the AP endonuclease 2 family. The cofactor is Zn(2+).

It catalyses the reaction Endonucleolytic cleavage to 5'-phosphooligonucleotide end-products.. Functionally, endonuclease IV plays a role in DNA repair. It cleaves phosphodiester bonds at apurinic or apyrimidinic (AP) sites, generating a 3'-hydroxyl group and a 5'-terminal sugar phosphate. In Shigella boydii serotype 18 (strain CDC 3083-94 / BS512), this protein is Probable endonuclease 4.